A 142-amino-acid chain; its full sequence is Transcription antitermination protein NusB (142 aa).

This sequence belongs to the NusB family.

Its function is as follows. Involved in transcription antitermination. Required for transcription of ribosomal RNA (rRNA) genes. Binds specifically to the boxA antiterminator sequence of the ribosomal RNA (rrn) operons. The polypeptide is Transcription antitermination protein NusB (Roseiflexus sp. (strain RS-1)).